Reading from the N-terminus, the 415-residue chain is Histidine--tRNA ligase (415 aa).

It belongs to the class-II aminoacyl-tRNA synthetase family. In terms of assembly, homodimer.

It localises to the cytoplasm. The enzyme catalyses tRNA(His) + L-histidine + ATP = L-histidyl-tRNA(His) + AMP + diphosphate + H(+). The polypeptide is Histidine--tRNA ligase (Clostridium perfringens (strain ATCC 13124 / DSM 756 / JCM 1290 / NCIMB 6125 / NCTC 8237 / Type A)).